A 318-amino-acid chain; its full sequence is Ubiquitin-like domain-containing CTD phosphatase 1 (318 aa).

A2 carries the N-acetylalanine modification. Positions 3-81 (LPIIVKWGGQ…IMMMGTREES (79 aa)) constitute a Ubiquitin-like domain. K117 carries the post-translational modification N6-acetyllysine. The FCP1 homology domain occupies 133 to 294 (PREGKKLLVL…LKLTQYLKEI (162 aa)). Mg(2+)-binding residues include D143, D145, and D253.

Mg(2+) serves as cofactor.

It is found in the nucleus. The enzyme catalyses O-phospho-L-seryl-[protein] + H2O = L-seryl-[protein] + phosphate. It catalyses the reaction O-phospho-L-threonyl-[protein] + H2O = L-threonyl-[protein] + phosphate. Functionally, dephosphorylates 26S nuclear proteasomes, thereby decreasing their proteolytic activity. Recruited to the 19S regulatory particle of the 26S proteasome through its interaction with 19S component PSMD2/RPN1. Once recruited, dephosphorylates 19S component PSMC2/RPT1 which impairs PSMC2 ATPase activity and disrupts 26S proteasome assembly. Has also been reported to stimulate the proteolytic activity of the 26S proteasome. The polypeptide is Ubiquitin-like domain-containing CTD phosphatase 1 (UBLCP1) (Pongo abelii (Sumatran orangutan)).